The sequence spans 203 residues: MLLASALVLGAYLLGSVSTAILVCRLAGLPDPRSQGSGNPGATNVLRTGRKGAAIITLLGDLLKGLVPVLVAHALGLEPVWIAAVALAAFLGHLFPVYHGFRGGKGVATALGVILGIQAWVGLAALATWLIVAAISRISSLSALTAATLTPVYMYLLTGERWYVAAGVLLAALIYWRHRANIRRLLRGEEPKIGNKTKNKSEV.

Helical transmembrane passes span 3 to 23, 75 to 95, 113 to 133, and 156 to 176; these read LASA…AILV, LGLE…GHLF, VILG…LIVA, and LLTG…LIYW.

It belongs to the PlsY family. Probably interacts with PlsX.

The protein resides in the cell inner membrane. The catalysed reaction is an acyl phosphate + sn-glycerol 3-phosphate = a 1-acyl-sn-glycero-3-phosphate + phosphate. The protein operates within lipid metabolism; phospholipid metabolism. Functionally, catalyzes the transfer of an acyl group from acyl-phosphate (acyl-PO(4)) to glycerol-3-phosphate (G3P) to form lysophosphatidic acid (LPA). This enzyme utilizes acyl-phosphate as fatty acyl donor, but not acyl-CoA or acyl-ACP. The sequence is that of Glycerol-3-phosphate acyltransferase from Thioalkalivibrio sulfidiphilus (strain HL-EbGR7).